A 188-amino-acid polypeptide reads, in one-letter code: Adenine phosphoribosyltransferase (188 aa).

It belongs to the purine/pyrimidine phosphoribosyltransferase family. In terms of assembly, homodimer.

It localises to the cytoplasm. It catalyses the reaction AMP + diphosphate = 5-phospho-alpha-D-ribose 1-diphosphate + adenine. The protein operates within purine metabolism; AMP biosynthesis via salvage pathway; AMP from adenine: step 1/1. Functionally, catalyzes a salvage reaction resulting in the formation of AMP, that is energically less costly than de novo synthesis. The polypeptide is Adenine phosphoribosyltransferase (Neisseria meningitidis serogroup A / serotype 4A (strain DSM 15465 / Z2491)).